Reading from the N-terminus, the 387-residue chain is 2-alkyl-3-oxoalkanoate reductase (387 aa).

Tyr-190 serves as the catalytic Proton acceptor. Lys-194 serves as a coordination point for NADP(+).

The protein belongs to the 3-beta-HSD family.

It catalyses the reaction a (2R,3S)-2-alkyl-3-hydroxyalkanoate + NADP(+) = an (R)-2-alkyl-3-oxoalkanoate + NADPH + H(+). Involved in olefin biosynthesis. Catalyzes the reversible stereospecific NADPH-dependent reduction of 2-alkyl-3-oxoalkanoic acids to 2-alkyl-3-hydroxyalkanoic acids. The S.oneidensis oleABCD genes produce 3,6,9,12,15,19,22,25,28-hentriacontanonaene, which may aid the cells in adapting to a sudden drop in temperature. In Shewanella oneidensis (strain ATCC 700550 / JCM 31522 / CIP 106686 / LMG 19005 / NCIMB 14063 / MR-1), this protein is 2-alkyl-3-oxoalkanoate reductase.